The primary structure comprises 500 residues: Protein-tyrosine sulfotransferase (500 aa).

An N-terminal signal peptide occupies residues 1 to 24 (MQMNSVWKLSLGLLLLSSVIGSFA). The Lumenal segment spans residues 25-467 (ELDFGHCETL…SVLGEMGEEK (443 aa)). Catalysis depends on residues R121 and E142. 6 N-linked (GlcNAc...) asparagine glycosylation sites follow: N156, N248, N315, N343, N359, and N395. A helical transmembrane segment spans residues 468-488 (LWKFVPVALMLLLIVLFFLFV). At 489–500 (NAKRRRTSKVKI) the chain is on the cytoplasmic side.

As to expression, expressed throughout the plant body, highest levels of expression are in the root apical meristem.

It localises to the golgi apparatus membrane. The enzyme catalyses L-tyrosyl-[protein] + 3'-phosphoadenylyl sulfate = O-sulfo-L-tyrosine-[protein] + adenosine 3',5'-bisphosphate + H(+). Catalyzes the O-sulfation of tyrosine residues within acidic motifs of polypeptides. In Arabidopsis thaliana (Mouse-ear cress), this protein is Protein-tyrosine sulfotransferase (TPST).